Consider the following 927-residue polypeptide: Huntington interacting protein related 1 (927 aa).

The ENTH domain occupies 7 to 136 (AREVFVRAQL…TFHNKYPVVP (130 aa)). Residues 336 to 524 (RAVEDEKFAK…RESHANQLVQ (189 aa)) are a coiled coil. Residues 673–914 (QTDIDKDVVG…ALRKQHYHMA (242 aa)) enclose the I/LWEQ domain.

This sequence belongs to the SLA2 family.

It is found in the cytoplasm. The protein resides in the cytoskeleton. In terms of biological role, regulates pre-synaptic vesicle recycling at neuromuscular junctions of mechanosensory neurons. Plays a role in maintaining a normal defecation cycle. This chain is Huntington interacting protein related 1 (hipr-1), found in Caenorhabditis elegans.